A 404-amino-acid polypeptide reads, in one-letter code: Cysteine desulfurase IscS (404 aa).

Pyridoxal 5'-phosphate is bound by residues 75–76 (AT), Asn-155, Gln-183, and 203–205 (TGH). Position 206 is an N6-(pyridoxal phosphate)lysine (Lys-206). A pyridoxal 5'-phosphate-binding site is contributed by Thr-243. Cys-328 acts as the Cysteine persulfide intermediate in catalysis. Position 328 (Cys-328) interacts with [2Fe-2S] cluster.

Belongs to the class-V pyridoxal-phosphate-dependent aminotransferase family. NifS/IscS subfamily. As to quaternary structure, homodimer. Forms a heterotetramer with IscU, interacts with other sulfur acceptors. Pyridoxal 5'-phosphate is required as a cofactor.

The protein localises to the cytoplasm. The catalysed reaction is (sulfur carrier)-H + L-cysteine = (sulfur carrier)-SH + L-alanine. It participates in cofactor biosynthesis; iron-sulfur cluster biosynthesis. In terms of biological role, master enzyme that delivers sulfur to a number of partners involved in Fe-S cluster assembly, tRNA modification or cofactor biosynthesis. Catalyzes the removal of elemental sulfur atoms from cysteine to produce alanine. Functions as a sulfur delivery protein for Fe-S cluster synthesis onto IscU, an Fe-S scaffold assembly protein, as well as other S acceptor proteins. The sequence is that of Cysteine desulfurase IscS from Cronobacter sakazakii (strain ATCC BAA-894) (Enterobacter sakazakii).